We begin with the raw amino-acid sequence, 705 residues long: FAD-dependent monooxygenase ATEG_03635 (705 aa).

Residues 86–115 (DVLICGAGPFGLELGLILARQGISFRIVDK), Val-208, 308–310 (RFY), and Ser-408 each bind FAD.

The protein belongs to the PheA/TfdB FAD monooxygenase family. FAD is required as a cofactor.

Its pathway is secondary metabolite biosynthesis. Its function is as follows. FAD-dependent monooxygenase; part of the cluster A that mediates the biosynthesis of azasperpyranones, members of the azaphilone family that exhibit anti-cancer activities. Azasperpyranones are synthesized by 2 clusters, A and B. Cluster A is responsible for the production of the polyhydric phenol moiety while the azaphilonoid scaffold is produced by the cluster B. The non-reducing polyketide synthase ATEG_03629 produces 5-methyl orsellinic acid, which is then reduced to 5-methyl orsellinic aldehyde by the NRPS-like protein ATEG_03630. 5-methyl orsellinic aldehyde is then first hydroxylated by the FAD-dependent monooxygenase ATEG_03635 and subsequently hydroxylated by the cytochrome P450 monooxygenase ATEG_03631 to produce the unstable polyhydric phenol precursor of azasperpyranones. On the other hand, the polyketide synthase ATEG_07659 is responsible for producing the 3,5-dimethyloctadienone moiety from acetyl-CoA, three malonyl-CoA, and two S-adenosyl methionines (SAM). The 3,5-dimethyloctadienone moiety is then loaded onto the SAT domain of ATEG_07661 and extended with four malonyl-CoA and one SAM, which leads to the formation of 2,4-dihydroxy-6-(5,7-dimethyl-2-oxo-trans-3-trans-5-nonadienyl)-3-methylbenzaldehyde (compound 8) after reductive release and aldol condensation. The FAD-dependent monooxygenase ATEG_07662 is the next enzyme in the biosynthesis sequence and hydroxylates the side chain at the benzylic position of compound 8. In Aspergillus nidulans, afoF, the ortholog of the FAD-dependent oxygenase ATEG_07660, is the key enzyme for the biosynthesis of asperfuranone by catalyzing the hydroxylation at C-8 of to prevent the formation of a six-membered ring hemiacetal intermediate and thus facilitating the formation of a five-membered ring to produce asperfuranone. In Aspergillus terreus, ATEG_07660 is probably not functional, which leads to the formation of the six-membered ring hemiacetal intermediate presperpyranone instead of asperfuranone. Finally, ATEG_03636 is involved in the condensation of the polyhydric phenol moiety produced by cluster A and the perasperpyranone precursor produced by cluster B, to yield azasperpyranone A. Further modifications of azasperpyranone A result in the production of derivatives, including azasperpyranone B to F. The chain is FAD-dependent monooxygenase ATEG_03635 from Aspergillus terreus (strain NIH 2624 / FGSC A1156).